Reading from the N-terminus, the 424-residue chain is Tol-Pal system protein TolB (424 aa).

Positions 1–24 (MNKARAIARWISFLLLIAAGQVCA) are cleaved as a signal peptide.

It belongs to the TolB family. As to quaternary structure, the Tol-Pal system is composed of five core proteins: the inner membrane proteins TolA, TolQ and TolR, the periplasmic protein TolB and the outer membrane protein Pal. They form a network linking the inner and outer membranes and the peptidoglycan layer.

It localises to the periplasm. In terms of biological role, part of the Tol-Pal system, which plays a role in outer membrane invagination during cell division and is important for maintaining outer membrane integrity. This is Tol-Pal system protein TolB from Methylococcus capsulatus (strain ATCC 33009 / NCIMB 11132 / Bath).